Consider the following 1543-residue polypeptide: ABC multidrug transporter AFR1 (1543 aa).

Residues 1-85 (MSAAGVPAEL…DGKQKRLPAD (85 aa)) are disordered. The segment covering 18-41 (TATTQNPSGLANSQVTSGPVSSAT) has biased composition (polar residues). Basic and acidic residues predominate over residues 62–83 (AVEAEKAEAIDAAGDGKQKRLP). An N-linked (GlcNAc...) asparagine glycan is attached at Asn-117. The interval 119–157 (SQRSQHELHRPTTRHSVRSSFSRKDRVVSRLTQDDAEKA) is disordered. A compositionally biased stretch (basic and acidic residues) spans 140–157 (SRKDRVVSRLTQDDAEKA). N-linked (GlcNAc...) asparagine glycans are attached at residues Asn-208 and Asn-398. Residues 222–474 (IKVLGIFGFN…MIGLGYRDLP (253 aa)) enclose the ABC transporter 1 domain. The next 5 membrane-spanning stretches (helical) occupy residues 585–605 (FGIS…GSVY), 619–639 (GGLL…ELPS), 670–690 (VPYN…MGGL), 695–715 (GAFF…SAFF), and 727–747 (VAAR…GYMI). Asn-823 carries an N-linked (GlcNAc...) asparagine glycan. Residues 845–865 (FGILLGFFTFFMFLQMLFIEV) form a helical membrane-spanning segment. The ABC transporter 2 domain occupies 918–1160 (FTWEGLSYTV…VLIDYLERNG (243 aa)). 954–961 (GASGAGKT) is a binding site for ATP. The N-linked (GlcNAc...) asparagine glycan is linked to Asn-1223. Helical transmembrane passes span 1254-1274 (WTRL…FLQL), 1285-1305 (VFAI…IEPQ), 1336-1356 (MPYS…GVGF), 1366-1386 (FFLM…AVAA), 1391-1411 (ILIA…FCGV), and 1517-1537 (FGIF…AARF).

This sequence belongs to the ABC transporter superfamily. ABCG family. PDR (TC 3.A.1.205) subfamily.

The protein localises to the cell membrane. The catalysed reaction is itraconazole(in) + ATP + H2O = itraconazole(out) + ADP + phosphate + H(+). It carries out the reaction voriconazole(in) + ATP + H2O = voriconazole(out) + ADP + phosphate + H(+). The enzyme catalyses fluconazole(in) + ATP + H2O = fluconazole(out) + ADP + phosphate + H(+). Functionally, major pleiotropic ABC efflux transporter that confers resistance to structurally and functionally unrelated compounds including azoles such as fluconazole (FLC), itraconazole (ITC), posaconazole (POS), and voriconazole (VRC). Is also able to efflux the eukaryote protein synthesis inhibitor cycloheximide (CHX). This is ABC multidrug transporter AFR1 from Cryptococcus neoformans var. grubii serotype A (strain H99 / ATCC 208821 / CBS 10515 / FGSC 9487) (Filobasidiella neoformans var. grubii).